Here is a 234-residue protein sequence, read N- to C-terminus: MDRFPRSDSIVQPRAGLQTYMAQVYGWMTVGLLLTAFVAWYAANSAAVMELLFTNRVFLIGLIIAQLALVIVLSAMIQKLSAGVTTMLFMLYSALTGLTLSSIFIVYTAASIASTFVVTAGMFGAMSLYGYTTKRDLSGFGNMLFMALIGIVLASLVNFWLKSEALMWAVTYIGVIVFVGLTAYDTQKLKNMGEQIDTRDTSNLRKYSILGALTLYLDFINLFLMLLRIFGNRR.

Residues 1–23 (MDRFPRSDSIVQPRAGLQTYMAQ) lie on the Periplasmic side of the membrane. A helical membrane pass occupies residues 24–44 (VYGWMTVGLLLTAFVAWYAAN). At 45-56 (SAAVMELLFTNR) the chain is on the cytoplasmic side. A helical transmembrane segment spans residues 57-77 (VFLIGLIIAQLALVIVLSAMI). At 78-79 (QK) the chain is on the periplasmic side. A helical membrane pass occupies residues 80–100 (LSAGVTTMLFMLYSALTGLTL). Topologically, residues 101 to 102 (SS) are cytoplasmic. Residues 103-123 (IFIVYTAASIASTFVVTAGMF) traverse the membrane as a helical segment. Over 124–136 (GAMSLYGYTTKRD) the chain is Periplasmic. A helical transmembrane segment spans residues 137–157 (LSGFGNMLFMALIGIVLASLV). Over 158–163 (NFWLKS) the chain is Cytoplasmic. A helical transmembrane segment spans residues 164 to 184 (EALMWAVTYIGVIVFVGLTAY). Residues 185-206 (DTQKLKNMGEQIDTRDTSNLRK) are Periplasmic-facing. The helical transmembrane segment at 207–227 (YSILGALTLYLDFINLFLMLL) threads the bilayer. The Cytoplasmic portion of the chain corresponds to 228–234 (RIFGNRR).

It belongs to the BI1 family.

The protein resides in the cell inner membrane. The chain is Inner membrane protein YbhL (ybhL) from Escherichia coli (strain K12).